A 303-amino-acid polypeptide reads, in one-letter code: Acetaldehyde dehydrogenase 2 (303 aa).

C130 acts as the Acyl-thioester intermediate in catalysis. Residues 161 to 169 (SVGPGTRKN) and N272 each bind NAD(+).

The protein belongs to the acetaldehyde dehydrogenase family.

The catalysed reaction is acetaldehyde + NAD(+) + CoA = acetyl-CoA + NADH + H(+). The chain is Acetaldehyde dehydrogenase 2 from Burkholderia vietnamiensis (strain G4 / LMG 22486) (Burkholderia cepacia (strain R1808)).